Reading from the N-terminus, the 329-residue chain is DNA-directed RNA polymerase subunit alpha (329 aa).

The segment at 1 to 231 (MSILSFQMPE…KHFMLFSDQT (231 aa)) is alpha N-terminal domain (alpha-NTD). Residues 247 to 329 (EEFLHMRKLL…DTAKYKLDED (83 aa)) are alpha C-terminal domain (alpha-CTD).

It belongs to the RNA polymerase alpha chain family. As to quaternary structure, homodimer. The RNAP catalytic core consists of 2 alpha, 1 beta, 1 beta' and 1 omega subunit. When a sigma factor is associated with the core the holoenzyme is formed, which can initiate transcription.

It catalyses the reaction RNA(n) + a ribonucleoside 5'-triphosphate = RNA(n+1) + diphosphate. In terms of biological role, DNA-dependent RNA polymerase catalyzes the transcription of DNA into RNA using the four ribonucleoside triphosphates as substrates. This is DNA-directed RNA polymerase subunit alpha from Cytophaga hutchinsonii (strain ATCC 33406 / DSM 1761 / CIP 103989 / NBRC 15051 / NCIMB 9469 / D465).